A 259-amino-acid chain; its full sequence is Exosome complex component Rrp42 (259 aa).

The protein belongs to the RNase PH family. Rrp42 subfamily. Component of the archaeal exosome complex. Forms a hexameric ring-like arrangement composed of 3 Rrp41-Rrp42 heterodimers. The hexameric ring associates with a trimer of Rrp4 and/or Csl4 subunits.

It is found in the cytoplasm. Functionally, non-catalytic component of the exosome, which is a complex involved in RNA degradation. Contributes to the structuring of the Rrp41 active site. The sequence is that of Exosome complex component Rrp42 from Archaeoglobus fulgidus (strain ATCC 49558 / DSM 4304 / JCM 9628 / NBRC 100126 / VC-16).